A 156-amino-acid polypeptide reads, in one-letter code: Ribosome maturation factor RimP (156 aa).

It belongs to the RimP family.

It localises to the cytoplasm. Required for maturation of 30S ribosomal subunits. This chain is Ribosome maturation factor RimP, found in Lachnospira eligens (strain ATCC 27750 / DSM 3376 / VPI C15-48 / C15-B4) (Eubacterium eligens).